We begin with the raw amino-acid sequence, 132 residues long: Small ribosomal subunit protein uS8c (132 aa).

It belongs to the universal ribosomal protein uS8 family. Part of the 30S ribosomal subunit.

It localises to the plastid. Its subcellular location is the chloroplast. One of the primary rRNA binding proteins, it binds directly to 16S rRNA central domain where it helps coordinate assembly of the platform of the 30S subunit. This chain is Small ribosomal subunit protein uS8c (rps8), found in Acorus calamus (Sweet flag).